A 397-amino-acid chain; its full sequence is Tyrosine--tRNA ligase (397 aa).

The 'HIGH' region signature appears at 41 to 50 (PTAPDLHLGH). A 'KMSKS' region motif is present at residues 225–229 (KMSKS). ATP is bound at residue K228. The S4 RNA-binding domain occupies 340–396 (AFLADSGLAGSRGEAKRLIKQGALSLDGEKLDDPNTPLTAGEYVVRLGKKRFLRLIV).

Belongs to the class-I aminoacyl-tRNA synthetase family. TyrS type 2 subfamily. In terms of assembly, homodimer.

It localises to the cytoplasm. The catalysed reaction is tRNA(Tyr) + L-tyrosine + ATP = L-tyrosyl-tRNA(Tyr) + AMP + diphosphate + H(+). In terms of biological role, catalyzes the attachment of tyrosine to tRNA(Tyr) in a two-step reaction: tyrosine is first activated by ATP to form Tyr-AMP and then transferred to the acceptor end of tRNA(Tyr). In Oleidesulfovibrio alaskensis (strain ATCC BAA-1058 / DSM 17464 / G20) (Desulfovibrio alaskensis), this protein is Tyrosine--tRNA ligase.